The sequence spans 436 residues: GTPase Obg (436 aa).

The 159-residue stretch at 2-160 (SMFLDTAKIK…RELQLELKIL (159 aa)) folds into the Obg domain. In terms of domain architecture, OBG-type G spans 161-338 (ADVGLVGFPS…LLDATAELLD (178 aa)). Residues 167-174 (GFPSVGKS), 192-196 (FTTIV), 214-217 (DLPG), 284-287 (NKMD), and 319-321 (SGL) contribute to the GTP site. 2 residues coordinate Mg(2+): S174 and T194. Residues 358-436 (GFDEEEKAFE…IGKFEFEFVD (79 aa)) enclose the OCT domain.

The protein belongs to the TRAFAC class OBG-HflX-like GTPase superfamily. OBG GTPase family. As to quaternary structure, monomer. It depends on Mg(2+) as a cofactor.

It localises to the cytoplasm. In terms of biological role, an essential GTPase which binds GTP, GDP and possibly (p)ppGpp with moderate affinity, with high nucleotide exchange rates and a fairly low GTP hydrolysis rate. Plays a role in control of the cell cycle, stress response, ribosome biogenesis and in those bacteria that undergo differentiation, in morphogenesis control. This Streptococcus pneumoniae serotype 2 (strain D39 / NCTC 7466) protein is GTPase Obg.